A 271-amino-acid polypeptide reads, in one-letter code: Neurexophilin-1 (271 aa).

The signal sequence occupies residues 1-21 (MQAACWYVLLLLQPTVYLVTC). The interval 22 to 97 (ANLTNGGKSE…WDWLRNSTDL (76 aa)) is II. 6 N-linked (GlcNAc...) asparagine glycosylation sites follow: Asn-23, Asn-68, Asn-93, Asn-146, Asn-156, and Asn-162. The III stretch occupies residues 98–176 (QEPRPRAKRR…LVPPTKIVEF (79 aa)). An IV (linker domain) region spans residues 177–185 (DLAQQTVID). The interval 186–271 (AKDSKSFNCR…HSDTPYFPSG (86 aa)) is v (Cys-rich).

It belongs to the neurexophilin family. In terms of processing, may be proteolytically processed at the boundary between the N-terminal non-conserved and the central conserved domain in neuron-like cells.

It is found in the secreted. Functionally, may be signaling molecules that resemble neuropeptides. Ligand for alpha-neurexins. The protein is Neurexophilin-1 (NXPH1) of Bos taurus (Bovine).